The sequence spans 508 residues: MAP kinase kinase MKK1/SSP32 (508 aa).

3 disordered regions span residues 1-21, 35-95, and 130-158; these read MASL…PRLK, IYLT…LSIN, and ELSG…YLRN. Positions 35–47 are enriched in polar residues; it reads IYLTSNGSSTTAY. The segment covering 48-66 has biased composition (low complexity); that stretch reads SSHTPEPLTSSTSTLFSQT. 2 stretches are compositionally biased toward polar residues: residues 67–79 and 131–158; these read RLHP…TLNT and LSGN…YLRN. Serine 192 is modified (phosphoserine). In terms of domain architecture, Protein kinase spans 221-488; the sequence is IETLGILGEG…PRQMINHPWI (268 aa). Residues 227 to 235 and lysine 250 each bind ATP; that span reads LGEGAGGSV. Aspartate 349 functions as the Proton acceptor in the catalytic mechanism.

Belongs to the protein kinase superfamily. STE Ser/Thr protein kinase family. MAP kinase kinase subfamily.

It catalyses the reaction L-seryl-[protein] + ATP = O-phospho-L-seryl-[protein] + ADP + H(+). The catalysed reaction is L-threonyl-[protein] + ATP = O-phospho-L-threonyl-[protein] + ADP + H(+). It carries out the reaction L-tyrosyl-[protein] + ATP = O-phospho-L-tyrosyl-[protein] + ADP + H(+). Functionally, involved in a signal transduction pathway that play a role in yeast cell morphogenesis and cell growth. This pathway seems to start by SMP3; then involve the kinase PKC1 that may act on the BCK1 kinase that then phosphorylates MKK1 and MKK2 which themselves phosphorylate the MPK1 kinase. The polypeptide is MAP kinase kinase MKK1/SSP32 (MKK1) (Saccharomyces cerevisiae (strain ATCC 204508 / S288c) (Baker's yeast)).